A 137-amino-acid chain; its full sequence is Large ribosomal subunit protein uL16 (137 aa).

Belongs to the universal ribosomal protein uL16 family. Part of the 50S ribosomal subunit.

Binds 23S rRNA and is also seen to make contacts with the A and possibly P site tRNAs. The protein is Large ribosomal subunit protein uL16 of Lactococcus lactis subsp. cremoris (strain SK11).